The following is a 282-amino-acid chain: Shikimate dehydrogenase (NADP(+)) (282 aa).

Residues Ser-15–Ser-17 and Thr-62 each bind shikimate. The active-site Proton acceptor is the Lys-66. The shikimate site is built by Asn-87 and Asp-103. Residues Gly-127–Ala-131, Asn-151–Lys-156, and Met-220 contribute to the NADP(+) site. Residue Tyr-222 participates in shikimate binding. Gly-244 is a binding site for NADP(+).

Belongs to the shikimate dehydrogenase family. In terms of assembly, homodimer.

It catalyses the reaction shikimate + NADP(+) = 3-dehydroshikimate + NADPH + H(+). It functions in the pathway metabolic intermediate biosynthesis; chorismate biosynthesis; chorismate from D-erythrose 4-phosphate and phosphoenolpyruvate: step 4/7. Its function is as follows. Involved in the biosynthesis of the chorismate, which leads to the biosynthesis of aromatic amino acids. Catalyzes the reversible NADPH linked reduction of 3-dehydroshikimate (DHSA) to yield shikimate (SA). This is Shikimate dehydrogenase (NADP(+)) from Shewanella baltica (strain OS155 / ATCC BAA-1091).